The primary structure comprises 669 residues: Glutamate--cysteine ligase (669 aa).

Belongs to the glutamate--cysteine ligase type 3 family. In terms of assembly, heterodimer of a catalytic heavy chain and a regulatory light chain.

The catalysed reaction is L-cysteine + L-glutamate + ATP = gamma-L-glutamyl-L-cysteine + ADP + phosphate + H(+). Its pathway is sulfur metabolism; glutathione biosynthesis; glutathione from L-cysteine and L-glutamate: step 1/2. Catalyzes the ATP-dependent ligation of L-glutamate and L-cysteine and participates in the first and rate-limiting step in glutathione biosynthesis. In Schizosaccharomyces pombe (strain 972 / ATCC 24843) (Fission yeast), this protein is Glutamate--cysteine ligase (gcs1).